The following is a 271-amino-acid chain: Phosphatidylglycerol--prolipoprotein diacylglyceryl transferase (271 aa).

7 helical membrane passes run 25 to 45 (WYGI…KFFV), 60 to 80 (YFIW…ILIY), 103 to 123 (FVGI…IATL), 134 to 154 (WIFL…GRIG), 181 to 201 (PSQL…VYLA), 209 to 229 (GELI…CEFY), and 235 to 255 (GIGF…IMFI). Residue Arg152 participates in a 1,2-diacyl-sn-glycero-3-phospho-(1'-sn-glycerol) binding.

It belongs to the Lgt family.

It localises to the cell inner membrane. It carries out the reaction L-cysteinyl-[prolipoprotein] + a 1,2-diacyl-sn-glycero-3-phospho-(1'-sn-glycerol) = an S-1,2-diacyl-sn-glyceryl-L-cysteinyl-[prolipoprotein] + sn-glycerol 1-phosphate + H(+). It participates in protein modification; lipoprotein biosynthesis (diacylglyceryl transfer). In terms of biological role, catalyzes the transfer of the diacylglyceryl group from phosphatidylglycerol to the sulfhydryl group of the N-terminal cysteine of a prolipoprotein, the first step in the formation of mature lipoproteins. This chain is Phosphatidylglycerol--prolipoprotein diacylglyceryl transferase, found in Campylobacter jejuni subsp. jejuni serotype O:6 (strain 81116 / NCTC 11828).